The primary structure comprises 669 residues: Elongation factor G-like protein (669 aa).

The tr-type G domain maps to 7–279 (ESLRNVAIVG…VLIKEAPDPS (273 aa)). Residues 16-23 (GPYGSGKT) are G1. 16-23 (GPYGSGKT) lines the GTP pocket. The segment at 59-63 (QMSVE) is G2. Positions 80–83 (DCPG) are G3. Residues 80 to 84 (DCPGS) and 134 to 137 (NKMD) contribute to the GTP site. The tract at residues 134–137 (NKMD) is G4. Residues 257 to 259 (AAE) form a G5 region.

This sequence belongs to the TRAFAC class translation factor GTPase superfamily. Classic translation factor GTPase family. EF-G/EF-2 subfamily.

This is Elongation factor G-like protein from Synechocystis sp. (strain ATCC 27184 / PCC 6803 / Kazusa).